Consider the following 509-residue polypeptide: GRAS family protein RAD1 (509 aa).

One can recognise a GRAS domain in the interval 125-508; sequence EDGCADGMRL…KPIVAASCWK (384 aa). The leucine repeat I (LRI) stretch occupies residues 132 to 198; sequence MRLVQLLIAC…IQPIGSGAGV (67 aa). Positions 217 to 286 are VHIID; the sequence is YRLVYETCPH…SGHGRVRRLR (70 aa). A VHIID motif is present at residues 248–252; sequence VHVVD. Residues 299–331 are leucine repeat II (LRII); the sequence is AIGDELSDYANNLGINLEFSVVQKNLENLQPED. The PFYRE stretch occupies residues 340–431; sequence LVVNSILQLH…QFYFAEEIKN (92 aa). Residues 434–508 are SAW; the sequence is SCEGPLRMER…KPIVAASCWK (75 aa).

It belongs to the GRAS family. In terms of assembly, interacts with RAM1 and NSP2. Expressed in roots under low phosphate (Pi) conditions.

The protein resides in the nucleus. Transcription factor acting as a regulator of arbuscular mycorrhiza (AM)-related genes (e.g. PT4, STR and RAM2). Required for the morphogenesis of arbuscules upon symbiosis with AM fungi (e.g. Rhizophagus irregularis). Also involved in restricting mycorrhizal colonization of the root meristem. In Lotus japonicus (Lotus corniculatus var. japonicus), this protein is GRAS family protein RAD1.